A 736-amino-acid polypeptide reads, in one-letter code: NWMVTRINATLETKQPRQYFIGVLDIAGFEIFDFNSFEQLCINFTNEKLQQFLNHHMFVLEQEEYKKEGIEWTFIDLGMDLQACIDLIEKPMGIMSILEEECMFPKATDMTFKAKLYDNHLGKSNNFQKPRNIKGKPEAHFALIHYAGTVDYNILGWLQKNKDPLNETVVALYQKSSLKLLSNLFANYAGADAPVEKGKGKAKKGSSFQTVSALHRENLNKLMTNLRSTHPHFVRCIIPNETKSPGVIDNPLVMHQLRCNGVLEGIRICRKGFPNRILYGDFRQRYRILNPAAIPEGQFIDSRKGAEKLLSSLDIDHNQYKFGHTKVFFKAGLLGLLEEMRDERLSRIITRIQAQSRGVLSRMEYKKLLERRDSLLIIQWNIRAFMGVKNWPWMKLYFKIKPLLKSAETEKEMATMKEEFARVKEALEKSEARRKELEEKTVSLLQEKNDLQLQVQAEQDNLADAEERCDQLIKNKIQLEAKVKEMNERLEDEEEMNAELTAKKRKLEDECSELKRDIDDLELTLAKVEKEKHATENKVKNLTEEMAGLDEIIAKLTKKKKALQEAHQQALDDLQAEEDKVNTLTKAKVKLEQQVDDLEGSLEQEKKVRMDLERAKRKLEGDLKLTQESIMDLENDKQQLDERLKKKDFELNALNARIEDEQALGSQLQKKLKELQARIEELEEELEAERTARAKVEKLRSDLSRELEEISERLEEAGGATSVQIEMNKKREAEFQ.

A Myosin motor domain is found at 1–342 (NWMVTRINAT…LLGLLEEMRD (342 aa)). Residues 219–241 (LNKLMTNLRSTHPHFVRCIIPNE) are actin-binding. Residues 345 to 374 (LSRIITRIQAQSRGVLSRMEYKKLLERRDS) enclose the IQ domain. Residues 403 to 736 (LLKSAETEKE…MNKKREAEFQ (334 aa)) are a coiled coil. Position 701 is a phosphoserine (Ser-701). The tract at residues 716-736 (EAGGATSVQIEMNKKREAEFQ) is disordered. The span at 727-736 (MNKKREAEFQ) shows a compositional bias: basic and acidic residues.

This sequence belongs to the TRAFAC class myosin-kinesin ATPase superfamily. Myosin family. Muscle myosin is a hexameric protein that consists of 2 heavy chain subunits (MHC), 2 alkali light chain subunits (MLC) and 2 regulatory light chain subunits (MLC-2). Interacts with ECPAS. Interacts (via C-terminus) with LRRC39.

Its subcellular location is the cytoplasm. The protein localises to the myofibril. It is found in the sarcomere. Myosins are actin-based motor molecules with ATPase activity essential for muscle contraction. Forms regular bipolar thick filaments that, together with actin thin filaments, constitute the fundamental contractile unit of skeletal and cardiac muscle. The polypeptide is Myosin-7 (MYH7) (Oryctolagus cuniculus (Rabbit)).